The chain runs to 488 residues: Proline--tRNA ligase (488 aa).

Belongs to the class-II aminoacyl-tRNA synthetase family. ProS type 3 subfamily. In terms of assembly, homodimer.

It is found in the cytoplasm. It catalyses the reaction tRNA(Pro) + L-proline + ATP = L-prolyl-tRNA(Pro) + AMP + diphosphate. Catalyzes the attachment of proline to tRNA(Pro) in a two-step reaction: proline is first activated by ATP to form Pro-AMP and then transferred to the acceptor end of tRNA(Pro). This is Proline--tRNA ligase from Borreliella afzelii (strain PKo) (Borrelia afzelii).